We begin with the raw amino-acid sequence, 204 residues long: ATP-dependent Clp protease proteolytic subunit (204 aa).

The active-site Nucleophile is serine 101. Histidine 126 is an active-site residue.

Belongs to the peptidase S14 family. As to quaternary structure, component of the chloroplastic Clp protease core complex.

It is found in the plastid. The protein resides in the chloroplast stroma. The catalysed reaction is Hydrolysis of proteins to small peptides in the presence of ATP and magnesium. alpha-casein is the usual test substrate. In the absence of ATP, only oligopeptides shorter than five residues are hydrolyzed (such as succinyl-Leu-Tyr-|-NHMec, and Leu-Tyr-Leu-|-Tyr-Trp, in which cleavage of the -Tyr-|-Leu- and -Tyr-|-Trp bonds also occurs).. Its function is as follows. Cleaves peptides in various proteins in a process that requires ATP hydrolysis. Has a chymotrypsin-like activity. Plays a major role in the degradation of misfolded proteins. This Phalaenopsis aphrodite subsp. formosana (Moth orchid) protein is ATP-dependent Clp protease proteolytic subunit.